Consider the following 124-residue polypeptide: Fluoride-specific ion channel FluC (124 aa).

The next 4 helical transmembrane spans lie at 4-24 (VLYI…ISIL), 35-55 (FGTL…YALA), 60-80 (IGPE…TTFS), and 100-120 (LNVL…QQLI). Na(+) contacts are provided by Gly-74 and Thr-77.

Belongs to the fluoride channel Fluc/FEX (TC 1.A.43) family.

Its subcellular location is the cell inner membrane. It carries out the reaction fluoride(in) = fluoride(out). Na(+) is not transported, but it plays an essential structural role and its presence is essential for fluoride channel function. Its function is as follows. Fluoride-specific ion channel. Important for reducing fluoride concentration in the cell, thus reducing its toxicity. The polypeptide is Fluoride-specific ion channel FluC (Shewanella amazonensis (strain ATCC BAA-1098 / SB2B)).